Here is a 171-residue protein sequence, read N- to C-terminus: Translationally-controlled tumor protein homolog (171 aa).

The 171-residue stretch at 1–171 (MIIYKDIITG…FKDGLEIEKC (171 aa)) folds into the TCTP domain.

Belongs to the TCTP family.

It localises to the cytoplasm. Involved in calcium binding and microtubule stabilization. The protein is Translationally-controlled tumor protein homolog (tpt1) of Danio rerio (Zebrafish).